Consider the following 388-residue polypeptide: MNIHEYQGKEILRKYNVPVPRGIPAFSVEEALKAAETLGGPVWVVKAQIHAGGRGKGGGVKVAKSMDEVKTYASNILGMTLVTHQTGPEGKKVNRLLIEEGADIKKELYVSLVVDRVSQKVALMASSEGGMDIEEVAAHTPEKIHTLIVDPQIGLQDAEADDIARKIGVPDASVPQARQALQGLYKAFWETDASLAEINPLILTGDGKVIALDAKFNFDSNALFRHPEIVAYRDLDEEDANEIEASKFDLAYISLDGNIGCLVNGAGLAMATMDTIKLFGGEPANFLDVGGGATTEKVTEAFKLMLKNPGLKAILVNIFGGIMRCDVIAEGVIAASKAVSLSVPLVVRMKGTNEDLGKKMLADSGLPIIAADTMEEAAQKVVAAAAGK.

The region spanning 9–244 is the ATP-grasp domain; it reads KEILRKYNVP…LDEEDANEIE (236 aa). Residues Lys46, 53-55, Glu99, Ala102, and Glu107 contribute to the ATP site; that span reads GRG. The Mg(2+) site is built by Asn199 and Asp213. Substrate-binding positions include Asn264 and 321-323; that span reads GIM.

Belongs to the succinate/malate CoA ligase beta subunit family. In terms of assembly, heterotetramer of two alpha and two beta subunits. Requires Mg(2+) as cofactor.

The enzyme catalyses succinate + ATP + CoA = succinyl-CoA + ADP + phosphate. It catalyses the reaction GTP + succinate + CoA = succinyl-CoA + GDP + phosphate. It participates in carbohydrate metabolism; tricarboxylic acid cycle; succinate from succinyl-CoA (ligase route): step 1/1. Succinyl-CoA synthetase functions in the citric acid cycle (TCA), coupling the hydrolysis of succinyl-CoA to the synthesis of either ATP or GTP and thus represents the only step of substrate-level phosphorylation in the TCA. The beta subunit provides nucleotide specificity of the enzyme and binds the substrate succinate, while the binding sites for coenzyme A and phosphate are found in the alpha subunit. The sequence is that of Succinate--CoA ligase [ADP-forming] subunit beta from Ralstonia nicotianae (strain ATCC BAA-1114 / GMI1000) (Ralstonia solanacearum).